Here is a 293-residue protein sequence, read N- to C-terminus: Beta-lactamase (293 aa).

The N-terminal stretch at 1-27 (MRFTATVLSRVATGLALGLSMATASLA) is a signal peptide. The active-site Acyl-ester intermediate is serine 74. A substrate-binding site is contributed by 238 to 240 (KSG).

The protein belongs to the class-A beta-lactamase family.

Its subcellular location is the periplasm. The enzyme catalyses a beta-lactam + H2O = a substituted beta-amino acid. Hydrolyzes beta-lactams antibiotics. Rates of hydrolysis relative to benzylpenicillin =100: ampicillin = 27, carbenicillin = 25, cloxacillin = 0, cephaloridine = 4. The polypeptide is Beta-lactamase (Rhodobacter capsulatus (Rhodopseudomonas capsulata)).